Here is a 193-residue protein sequence, read N- to C-terminus: MIGRIAGTLIEKNPPHLLVDCHGVGYEVDVPMSTFYNLPAVGQPVTLLTQLIVREDAHLLYGFGTASERNTFRELIKITGIGARMALAVLSGMSVPELAQAITLQEAGRLTRIPGIGKKTAERLLLELKGKLGAELGHVPGTPAVPDSAVDVLNALLALGYSEKEAAAAIKQVPAGTGVSDGIKLALKALSKA.

Positions 1–64 (MIGRIAGTLI…EDAHLLYGFG (64 aa)) are domain I. The interval 65–143 (TASERNTFRE…AELGHVPGTP (79 aa)) is domain II. A flexible linker region spans residues 144-151 (AVPDSAVD). Positions 151-193 (DVLNALLALGYSEKEAAAAIKQVPAGTGVSDGIKLALKALSKA) are domain III.

The protein belongs to the RuvA family. As to quaternary structure, homotetramer. Forms an RuvA(8)-RuvB(12)-Holliday junction (HJ) complex. HJ DNA is sandwiched between 2 RuvA tetramers; dsDNA enters through RuvA and exits via RuvB. An RuvB hexamer assembles on each DNA strand where it exits the tetramer. Each RuvB hexamer is contacted by two RuvA subunits (via domain III) on 2 adjacent RuvB subunits; this complex drives branch migration. In the full resolvosome a probable DNA-RuvA(4)-RuvB(12)-RuvC(2) complex forms which resolves the HJ.

It is found in the cytoplasm. Its function is as follows. The RuvA-RuvB-RuvC complex processes Holliday junction (HJ) DNA during genetic recombination and DNA repair, while the RuvA-RuvB complex plays an important role in the rescue of blocked DNA replication forks via replication fork reversal (RFR). RuvA specifically binds to HJ cruciform DNA, conferring on it an open structure. The RuvB hexamer acts as an ATP-dependent pump, pulling dsDNA into and through the RuvAB complex. HJ branch migration allows RuvC to scan DNA until it finds its consensus sequence, where it cleaves and resolves the cruciform DNA. The polypeptide is Holliday junction branch migration complex subunit RuvA (Cupriavidus necator (strain ATCC 17699 / DSM 428 / KCTC 22496 / NCIMB 10442 / H16 / Stanier 337) (Ralstonia eutropha)).